A 159-amino-acid chain; its full sequence is uncharacterized protein (159 aa).

Residues 4–24 (QIALILSLIILIFFIYKFAMF) form a helical membrane-spanning segment.

Its subcellular location is the membrane. This is an uncharacterized protein from Acheta domesticus (House cricket).